The primary structure comprises 495 residues: Heterogeneous nuclear ribonucleoprotein Q (495 aa).

Over residues 1 to 10 the composition is skewed to basic and acidic residues; sequence MSDARDNDDR. Positions 1-101 are disordered; sequence MSDARDNDDR…KPPSPIDDED (101 aa). 2 stretches are compositionally biased toward acidic residues: residues 11-46 and 67-101; these read VDFE…DDDV and MEDV…DDED. RRM domains lie at 116-194, 196-278, and 292-368; these read SEVF…LSET, NRLF…WADP, and KALY…LAKP. The tract at residues 452–495 is disordered; that stretch reads MPMAAAPPQRPRRNDRNNGSSGGSGRDNSHEHDGNRGGRRYRPY. Residues 478 to 487 are compositionally biased toward basic and acidic residues; that stretch reads DNSHEHDGNR.

As to quaternary structure, interacts with LHP1 in the nucleus on a common set of chromatin regions. In terms of tissue distribution, predominantly expressed in vascular and meristematic tissues. Expressed throughout development in seedlings, roots, leaves, floral buds and siliques.

Its subcellular location is the nucleus. The protein localises to the cytoplasm. It is found in the microsome. Its function is as follows. Transcriptional activator that binds DNA on GAGA-like motif and 5'-(C/G)ACGTG(G/T)C(A/G)-3' consensus motif in the promoters of target genes. Component of ribonucleosomes, which are complexes of at least 20 other different heterogeneous nuclear ribonucleoproteins (hnRNP). hnRNP play an important role in processing of precursor mRNA in the nucleus. Required during flower development and for cell fate determination. Acts both as an antagonist and as a promoter of polycomb LHP1 gene regulation activity, depending of target genes, to regulate the transcription of stress-responsive and flowering genes. May regulate histone H3 trimethylation on lysine 27 (H3K27me3). Recognizes and binds histone H3 tails methylated at 'Lys-4' (H3K4me) and acetylated at 'Lys-9' (H3K9ac), leading to epigenetic activation. When in complex with LHP1, recognizes and binds histone H3 tails methylated at 'Lys-4' (H3K4me) and 'Lys-27' (H3K27me), mostly corresponding to stress-responsive genes. May function as a suppressor of cell-autonomous immune responses involving glucosinolates, salicylic acid (SA) and jasmonic acid (JA) pathways toward pathogenic bacteria and fungi. The polypeptide is Heterogeneous nuclear ribonucleoprotein Q (Arabidopsis thaliana (Mouse-ear cress)).